Here is a 74-residue protein sequence, read N- to C-terminus: U12-theraphotoxin-Hs1a (74 aa).

An N-terminal signal peptide occupies residues 1–20; sequence MNVKILLLLVGLNLVMHSNA. Residues 21–40 constitute a propeptide that is removed on maturation; that stretch reads TGDSETNPAETLFIEEIFRR. Intrachain disulfides connect C42–C56, C49–C61, and C55–C71.

This sequence belongs to the neurotoxin 35 family. Expressed by the venom gland.

It localises to the secreted. Functionally, putative ion channel inhibitor. In Cyriopagopus schmidti (Chinese bird spider), this protein is U12-theraphotoxin-Hs1a.